Reading from the N-terminus, the 134-residue chain is Holo-[acyl-carrier-protein] synthase (134 aa).

Mg(2+) contacts are provided by D8 and E59.

Belongs to the P-Pant transferase superfamily. AcpS family. It depends on Mg(2+) as a cofactor.

It is found in the cytoplasm. The enzyme catalyses apo-[ACP] + CoA = holo-[ACP] + adenosine 3',5'-bisphosphate + H(+). In terms of biological role, transfers the 4'-phosphopantetheine moiety from coenzyme A to a Ser of acyl-carrier-protein. The sequence is that of Holo-[acyl-carrier-protein] synthase from Zymomonas mobilis subsp. mobilis (strain ATCC 31821 / ZM4 / CP4).